The primary structure comprises 131 residues: Large ribosomal subunit protein bL19 (131 aa).

Residues 110–131 are disordered; the sequence is KSARIAERTDDRAKKAKATAAE. The segment covering 113 to 122 has biased composition (basic and acidic residues); the sequence is RIAERTDDRA.

The protein belongs to the bacterial ribosomal protein bL19 family.

Its function is as follows. This protein is located at the 30S-50S ribosomal subunit interface and may play a role in the structure and function of the aminoacyl-tRNA binding site. The protein is Large ribosomal subunit protein bL19 of Azorhizobium caulinodans (strain ATCC 43989 / DSM 5975 / JCM 20966 / LMG 6465 / NBRC 14845 / NCIMB 13405 / ORS 571).